A 395-amino-acid polypeptide reads, in one-letter code: Leucine aminopeptidase 1 (395 aa).

Residues 1-19 (MKHLSLLALAAVAPTTALA) form the signal peptide. Positions 20–95 (GVIDHQQVTF…SVKSFEQTKV (76 aa)) are excised as a propeptide. A glycan (N-linked (GlcNAc...) asparagine) is linked at N187. Residues H195, D214, E253, and D280 each coordinate Zn(2+). A disulfide bond links C329 and C333. H362 lines the Zn(2+) pocket.

It belongs to the peptidase M28 family. M28E subfamily. Monomer. Zn(2+) serves as cofactor.

The protein localises to the secreted. In terms of biological role, extracellular aminopeptidase that allows assimilation of proteinaceous substrates. The protein is Leucine aminopeptidase 1 (LAP1) of Uncinocarpus reesii (strain UAMH 1704).